The sequence spans 319 residues: Ribonucleoside-diphosphate reductase 2 subunit beta (319 aa).

Fe cation contacts are provided by Asp-67, Glu-98, and His-101. The active site involves Tyr-105. The Fe cation site is built by Glu-158, Glu-192, and His-195.

Belongs to the ribonucleoside diphosphate reductase small chain family. In terms of assembly, tetramer of two alpha and two beta subunits. Requires Fe cation as cofactor.

The enzyme catalyses a 2'-deoxyribonucleoside 5'-diphosphate + [thioredoxin]-disulfide + H2O = a ribonucleoside 5'-diphosphate + [thioredoxin]-dithiol. Provides the precursors necessary for DNA synthesis. Catalyzes the biosynthesis of deoxyribonucleotides from the corresponding ribonucleotides. R2F contains the tyrosyl radical required for catalysis. The polypeptide is Ribonucleoside-diphosphate reductase 2 subunit beta (nrdF) (Salmonella typhimurium (strain LT2 / SGSC1412 / ATCC 700720)).